A 47-amino-acid polypeptide reads, in one-letter code: Defensin-like protein 2 (47 aa).

Intrachain disulfides connect C3–C47, C14–C36, C20–C41, and C24–C43.

The protein belongs to the DEFL family.

This is Defensin-like protein 2 from Zea mays (Maize).